We begin with the raw amino-acid sequence, 366 residues long: Anhydro-N-acetylmuramic acid kinase (366 aa).

10-17 (GTSLDGVD) is an ATP binding site.

This sequence belongs to the anhydro-N-acetylmuramic acid kinase family.

It catalyses the reaction 1,6-anhydro-N-acetyl-beta-muramate + ATP + H2O = N-acetyl-D-muramate 6-phosphate + ADP + H(+). The protein operates within amino-sugar metabolism; 1,6-anhydro-N-acetylmuramate degradation. Its pathway is cell wall biogenesis; peptidoglycan recycling. In terms of biological role, catalyzes the specific phosphorylation of 1,6-anhydro-N-acetylmuramic acid (anhMurNAc) with the simultaneous cleavage of the 1,6-anhydro ring, generating MurNAc-6-P. Is required for the utilization of anhMurNAc either imported from the medium or derived from its own cell wall murein, and thus plays a role in cell wall recycling. This Nitrobacter winogradskyi (strain ATCC 25391 / DSM 10237 / CIP 104748 / NCIMB 11846 / Nb-255) protein is Anhydro-N-acetylmuramic acid kinase.